The sequence spans 156 residues: Type II secretion system core protein G (156 aa).

The propeptide at 1–22 (MQQSQRGCGQNSYGQSGYRQRG) is leader sequence. Position 23 is an N-methylphenylalanine (F23). The chain crosses the membrane as a helical span at residues 23–43 (FTLLEIMVVIVILGVLASLVV).

Belongs to the GSP G family. As to quaternary structure, type II secretion system is composed of four main components: the outer membrane complex, the inner membrane complex, the cytoplasmic secretion ATPase and the periplasm-spanning pseudopilus. Forms homomultimers. Post-translationally, cleaved by the prepilin peptidase. Methylated by prepilin peptidase at the amino group of the N-terminal phenylalanine once the leader sequence is cleaved.

It localises to the cell inner membrane. Functionally, core component of the type II secretion system required for the energy-dependent secretion of extracellular factors such as proteases and toxins from the periplasm. Pseudopilin (pilin-like) protein that polymerizes to form the pseudopilus. Further polymerization triggers pseudopilus growth. In Pectobacterium carotovorum subsp. carotovorum (Erwinia carotovora subsp. carotovora), this protein is Type II secretion system core protein G (outG).